We begin with the raw amino-acid sequence, 224 residues long: Cytidylate kinase (224 aa).

10-18 (GPSGVGKGT) lines the ATP pocket.

This sequence belongs to the cytidylate kinase family. Type 1 subfamily.

It localises to the cytoplasm. It carries out the reaction CMP + ATP = CDP + ADP. The enzyme catalyses dCMP + ATP = dCDP + ADP. The protein is Cytidylate kinase of Haemophilus ducreyi (strain 35000HP / ATCC 700724).